Consider the following 526-residue polypeptide: MSSATPAAAAPDTVLVVDFGAQYAQLIARRVREARVYSEIVPSSMPVEEILAKNPAAIILSGGPSSVYEAGAPTLDRSLFEAGVPVFGMCYGFQLMAQTLGGTVDNSGAREYGRTELAVSKPSSTLFEGTPAEQSVWMSHGDACSAAPEGFTVTGSTDVVPVAAFENDEKKLYGVQYHPEVMHSTHGQQVLEHFLYRGAGLSPDWTTGNVIEEQVAAIRAQVGDRRAICGLSGGVDSAVAAALVQKAIGSQLTCVYVDHGLMRKGETEQVEKDFVAATGVQLKVVDASERFLGALAGVSDPEQKRKIIGREFIRVFEQAQLEIMREDGPEVAFLVQGTLYPDVVESGGGTGTANIKSHHNVGGLPDDIEFELVEPLRQLFKDEVRMVGQELGLPDEIVQRQPFPGPGLGIRIVGEVTKERLDLLREADAIAREELTAAGLDRDIWQCPVVLLADVRSVGVQGDGRTYGHPIVLRPVSSEDAMTADWSRLPYEVLSKISTRITNEVTDVNRVVLDVTSKPPGTIEWE.

Positions Thr13 to Asp204 constitute a Glutamine amidotransferase type-1 domain. Cys90 (nucleophile) is an active-site residue. Catalysis depends on residues His178 and Glu180. A GMPS ATP-PPase domain is found at Trp205–Arg400. Ser232 to Ala238 provides a ligand contact to ATP.

Homodimer.

The catalysed reaction is XMP + L-glutamine + ATP + H2O = GMP + L-glutamate + AMP + diphosphate + 2 H(+). Its pathway is purine metabolism; GMP biosynthesis; GMP from XMP (L-Gln route): step 1/1. Functionally, catalyzes the synthesis of GMP from XMP. In Streptomyces coelicolor (strain ATCC BAA-471 / A3(2) / M145), this protein is GMP synthase [glutamine-hydrolyzing] (guaA).